Here is a 42-residue protein sequence, read N- to C-terminus: Photosystem II reaction center protein J (42 aa).

Residues 10 to 30 (IPLWLVGTVAGTAAIGLLGIF) form a helical membrane-spanning segment.

It belongs to the PsbJ family. As to quaternary structure, PSII is composed of 1 copy each of membrane proteins PsbA, PsbB, PsbC, PsbD, PsbE, PsbF, PsbH, PsbI, PsbJ, PsbK, PsbL, PsbM, PsbT, PsbX, PsbY, PsbZ, Psb30/Ycf12, at least 3 peripheral proteins of the oxygen-evolving complex and a large number of cofactors. It forms dimeric complexes.

It localises to the plastid. The protein resides in the chloroplast thylakoid membrane. In terms of biological role, one of the components of the core complex of photosystem II (PSII). PSII is a light-driven water:plastoquinone oxidoreductase that uses light energy to abstract electrons from H(2)O, generating O(2) and a proton gradient subsequently used for ATP formation. It consists of a core antenna complex that captures photons, and an electron transfer chain that converts photonic excitation into a charge separation. The polypeptide is Photosystem II reaction center protein J (Pleurastrum terricola (Filamentous green alga)).